The sequence spans 823 residues: Lon protease (823 aa).

One can recognise a Lon N-terminal domain in the interval 51 to 246 (IPILPLRNMV…RLLFILNREY (196 aa)). Position 397-404 (397-404 (GPPGVGKT)) interacts with ATP. The 183-residue stretch at 633–815 (NDYAGVVTGL…QQVVDLALLR (183 aa)) folds into the Lon proteolytic domain. Active-site residues include serine 721 and lysine 764.

The protein belongs to the peptidase S16 family. As to quaternary structure, homohexamer. Organized in a ring with a central cavity.

Its subcellular location is the cytoplasm. The catalysed reaction is Hydrolysis of proteins in presence of ATP.. Functionally, ATP-dependent serine protease that mediates the selective degradation of mutant and abnormal proteins as well as certain short-lived regulatory proteins. Required for cellular homeostasis and for survival from DNA damage and developmental changes induced by stress. Degrades polypeptides processively to yield small peptide fragments that are 5 to 10 amino acids long. Binds to DNA in a double-stranded, site-specific manner. This chain is Lon protease, found in Parabacteroides distasonis (strain ATCC 8503 / DSM 20701 / CIP 104284 / JCM 5825 / NCTC 11152).